The following is a 174-amino-acid chain: Scytalone dehydratase-like protein Arp1 (174 aa).

Y49 contacts substrate. Active-site residues include H84 and H109. N130 contacts substrate.

The protein belongs to the scytalone dehydratase family. Homotrimer. Each subunit contains an active site, located in the central part of the hydrophobic core of the monomer, which functions independently.

Functionally, scytalone dehydratase-like protein; part of the Pks2 gene cluster that mediates the formation of infectious structures (appressoria), enabling these fungi to kill insects faster. The product of the Pks2 gene cluster is different from the one of Pks1 and has still not been identified. The polypeptide is Scytalone dehydratase-like protein Arp1 (Metarhizium majus (strain ARSEF 297)).